The chain runs to 282 residues: Diaminopimelate epimerase (282 aa).

Substrate contacts are provided by N13, Q45, and N64. The active-site Proton donor is C73. Substrate-binding positions include 74 to 75 (GN), N155, N189, and 207 to 208 (ER). C216 serves as the catalytic Proton acceptor. 217–218 (GS) is a substrate binding site.

It belongs to the diaminopimelate epimerase family. As to quaternary structure, homodimer.

The protein localises to the cytoplasm. The enzyme catalyses (2S,6S)-2,6-diaminopimelate = meso-2,6-diaminopimelate. It functions in the pathway amino-acid biosynthesis; L-lysine biosynthesis via DAP pathway; DL-2,6-diaminopimelate from LL-2,6-diaminopimelate: step 1/1. In terms of biological role, catalyzes the stereoinversion of LL-2,6-diaminopimelate (L,L-DAP) to meso-diaminopimelate (meso-DAP), a precursor of L-lysine and an essential component of the bacterial peptidoglycan. The chain is Diaminopimelate epimerase from Bartonella bacilliformis (strain ATCC 35685 / KC583 / Herrer 020/F12,63).